Here is a 144-residue protein sequence, read N- to C-terminus: uncharacterized protein (144 aa).

Residues 13 to 120 form the HIT domain; the sequence is IFCGIVEGNV…VPKYETGLGF (108 aa). Positions 105-109 match the Histidine triad motif motif; the sequence is HYHMH.

This is an uncharacterized protein from Mycoplasma pneumoniae (strain ATCC 29342 / M129 / Subtype 1) (Mycoplasmoides pneumoniae).